A 331-amino-acid polypeptide reads, in one-letter code: GTPase Obg (331 aa).

Positions 1–159 (MHFIDEVKIY…MWIHLRLKLL (159 aa)) constitute an Obg domain. The OBG-type G domain occupies 160-327 (SDVGLIGLPN…IVKLALEIIK (168 aa)). GTP is bound by residues 166 to 173 (GLPNAGKS), 191 to 195 (FTTLV), 212 to 215 (DIPG), 279 to 282 (NKCD), and 308 to 310 (STY). Mg(2+) contacts are provided by S173 and T193.

This sequence belongs to the TRAFAC class OBG-HflX-like GTPase superfamily. OBG GTPase family. As to quaternary structure, monomer. The cofactor is Mg(2+).

It localises to the cytoplasm. Its function is as follows. An essential GTPase which binds GTP, GDP and possibly (p)ppGpp with moderate affinity, with high nucleotide exchange rates and a fairly low GTP hydrolysis rate. Plays a role in control of the cell cycle, stress response, ribosome biogenesis and in those bacteria that undergo differentiation, in morphogenesis control. The protein is GTPase Obg of Rickettsia prowazekii (strain Madrid E).